Here is an 809-residue protein sequence, read N- to C-terminus: Cell division control protein 48 homolog A (809 aa).

Residue Ser-2 is modified to N-acetylserine. Phosphoserine is present on Ser-41. ADP contacts are provided by residues Gly-210, 248-256 (GPPGSGKTL), and His-387. 521–529 (GPPGCGKTL) provides a ligand contact to ATP. The tract at residues 782–809 (AGSGATTGVADPFATSAAAAGDDDDLYN) is disordered. A compositionally biased stretch (low complexity) spans 791–801 (ADPFATSAAAA).

It belongs to the AAA ATPase family. Homohexamer. Interacts with SERK1, GRF6, KAPP and SYP31, but not with KNOLLE. Component of the SERK1 signaling complex, composed of KAPP, CDC48A, GRF6 or GRF7, SERK1, SERK2, SERK3/BAK1 and BRI1. Interacts with PUX1, PUX2, PUX3, PUX4, PUX5, PUX7 and PUX11 via its N-terminus. Phosphorylated on at least one threonine residue and on Ser-41 by SERK1.

It is found in the nucleus. The protein resides in the cytoplasm. The protein localises to the cytoskeleton. Its subcellular location is the phragmoplast. It localises to the cell membrane. In terms of biological role, probably functions in cell division and growth processes. Interacts with certain SNAREs as part of specialized membrane fusion events where vesicles from the same organelle fuse (homotypic fusion). The chain is Cell division control protein 48 homolog A (CDC48A) from Arabidopsis thaliana (Mouse-ear cress).